A 355-amino-acid polypeptide reads, in one-letter code: Tetraacyldisaccharide 4'-kinase (355 aa).

49-56 (SAGGTGKT) is an ATP binding site.

Belongs to the LpxK family.

It carries out the reaction a lipid A disaccharide + ATP = a lipid IVA + ADP + H(+). It participates in glycolipid biosynthesis; lipid IV(A) biosynthesis; lipid IV(A) from (3R)-3-hydroxytetradecanoyl-[acyl-carrier-protein] and UDP-N-acetyl-alpha-D-glucosamine: step 6/6. Functionally, transfers the gamma-phosphate of ATP to the 4'-position of a tetraacyldisaccharide 1-phosphate intermediate (termed DS-1-P) to form tetraacyldisaccharide 1,4'-bis-phosphate (lipid IVA). In Chlorobium phaeobacteroides (strain DSM 266 / SMG 266 / 2430), this protein is Tetraacyldisaccharide 4'-kinase.